The chain runs to 156 residues: Putative pre-16S rRNA nuclease (156 aa).

It belongs to the YqgF nuclease family.

It localises to the cytoplasm. In terms of biological role, could be a nuclease involved in processing of the 5'-end of pre-16S rRNA. The sequence is that of Putative pre-16S rRNA nuclease from Ehrlichia ruminantium (strain Gardel).